Consider the following 874-residue polypeptide: Alanine--tRNA ligase (874 aa).

Histidine 564, histidine 568, cysteine 665, and histidine 669 together coordinate Zn(2+).

It belongs to the class-II aminoacyl-tRNA synthetase family. The cofactor is Zn(2+).

Its subcellular location is the cytoplasm. The catalysed reaction is tRNA(Ala) + L-alanine + ATP = L-alanyl-tRNA(Ala) + AMP + diphosphate. Functionally, catalyzes the attachment of alanine to tRNA(Ala) in a two-step reaction: alanine is first activated by ATP to form Ala-AMP and then transferred to the acceptor end of tRNA(Ala). Also edits incorrectly charged Ser-tRNA(Ala) and Gly-tRNA(Ala) via its editing domain. This Burkholderia pseudomallei (strain 668) protein is Alanine--tRNA ligase.